Reading from the N-terminus, the 621-residue chain is Chaperone protein HtpG (621 aa).

The interval 1-325 is a; substrate-binding; that stretch reads MTDASVKETF…SQDLSLNVSR (325 aa). The interval 326–541 is b; it reads EMLQSDPKLA…EGDIDVNLER (216 aa). The c stretch occupies residues 542 to 621; the sequence is MLKRHGQLQD…RLGSVMDSAL (80 aa).

The protein belongs to the heat shock protein 90 family. In terms of assembly, homodimer.

It is found in the cytoplasm. In terms of biological role, molecular chaperone. Has ATPase activity. This is Chaperone protein HtpG from Roseobacter denitrificans (strain ATCC 33942 / OCh 114) (Erythrobacter sp. (strain OCh 114)).